The sequence spans 418 residues: 3-deoxy-D-manno-octulosonic acid transferase (418 aa).

Residues Phe-7–Gly-27 form a helical; Signal-anchor membrane-spanning segment. Glu-60 (proton acceptor) is an active-site residue. CMP is bound by residues Pro-264–Arg-265, Phe-305–Glu-307, and Asn-330–Glu-333.

It belongs to the glycosyltransferase group 1 family. Glycosyltransferase 30 subfamily.

It is found in the cell inner membrane. The enzyme catalyses lipid IVA (E. coli) + CMP-3-deoxy-beta-D-manno-octulosonate = alpha-Kdo-(2-&gt;6)-lipid IVA (E. coli) + CMP + H(+). It functions in the pathway bacterial outer membrane biogenesis; LPS core biosynthesis. Its function is as follows. Involved in lipopolysaccharide (LPS) biosynthesis. Catalyzes the transfer of 3-deoxy-D-manno-octulosonate (Kdo) residue(s) from CMP-Kdo to lipid IV(A), the tetraacyldisaccharide-1,4'-bisphosphate precursor of lipid A. In Rickettsia bellii (strain RML369-C), this protein is 3-deoxy-D-manno-octulosonic acid transferase (waaA).